The following is a 120-amino-acid chain: Large ribosomal subunit protein uL18 (120 aa).

It belongs to the universal ribosomal protein uL18 family. In terms of assembly, part of the 50S ribosomal subunit; part of the 5S rRNA/L5/L18/L25 subcomplex. Contacts the 5S and 23S rRNAs.

Its function is as follows. This is one of the proteins that bind and probably mediate the attachment of the 5S RNA into the large ribosomal subunit, where it forms part of the central protuberance. This is Large ribosomal subunit protein uL18 from Rhodospirillum centenum (strain ATCC 51521 / SW).